Reading from the N-terminus, the 84-residue chain is Protein myomixer (84 aa).

Over 1 to 4 the chain is Cytoplasmic; the sequence is MPTP. A helical transmembrane segment spans residues 5-25; sequence LLPLLLRLLLSCLLLPAARLA. The Extracellular portion of the chain corresponds to 26–84; the sequence is RQYLLPLLRRLARRLGSQDMREALLGCLLFILSQRHSPDAGEASRVDRLERRERLGPQK. The AxLyCxL signature appears at 48–57; it reads ALLGCLLFIL. The segment at 62 to 84 is disordered; sequence SPDAGEASRVDRLERRERLGPQK.

Belongs to the MYMX family. As to quaternary structure, interacts with MYMK.

The protein localises to the cell membrane. Functionally, myoblast-specific protein that mediates myoblast fusion, an essential step for the formation of multi-nucleated muscle fibers. Involved in membrane fusion downstream of the lipid mixing step mediated by MYMK. Acts by generating membrane stresses via its extracellular C-terminus, leading to drive fusion pore formation. Acts independently of MYMK. Involved in skeletal muscle regeneration in response to injury by mediating the fusion of satellite cells, a population of muscle stem cells, with injured myofibers. The chain is Protein myomixer from Homo sapiens (Human).